The following is a 69-amino-acid chain: Putative F-box protein At2g33705 (69 aa).

Residues Gly-14–Leu-59 enclose the F-box domain.

The chain is Putative F-box protein At2g33705 from Arabidopsis thaliana (Mouse-ear cress).